A 346-amino-acid polypeptide reads, in one-letter code: Enkurin domain-containing protein 1 (346 aa).

The tract at residues 1 to 35 is disordered; it reads MCEGPSRISGPIPPDPTLCPDNYRRPTSAQGRLEG. Position 91 is a phosphoserine (Ser91). Residues 91-171 form a required for binding to microtubules region; the sequence is SLKRKDPKDH…AHFLRAHSRC (81 aa). Residues 114–125 show a composition bias toward basic and acidic residues; that stretch reads RFREQERSREQG. Disordered regions lie at residues 114-137, 167-197, and 260-280; these read RFRE…WRSP, AHSR…EPGL, and AEAR…TRMP. Residue Ser136 is modified to Phosphoserine. Positions 174 to 190 are enriched in pro residues; that stretch reads GLPPPHVSSPQPTPPGP. Positions 251-343 constitute an Enkurin domain; that stretch reads ERRDLWRREA…IFSRPKVFVK (93 aa).

As to quaternary structure, interacts with alpha-tubulin. Interacts (via central region) with CCP110 (via N-terminal region); competes with CEP97 for binding to CCP110.

It is found in the cytoplasm. The protein resides in the cytoskeleton. It localises to the microtubule organizing center. Its subcellular location is the centrosome. The protein localises to the centriole. It is found in the cilium basal body. The protein resides in the cell projection. It localises to the cilium. Its subcellular location is the spindle. The protein localises to the spindle pole. It is found in the cilium axoneme. Its function is as follows. Microtubule-binding protein which regulates microtubule organization and stability. Promotes the stability of astral microtubules and facilitates the proper orientation of the mitotic spindle. This allows the oriented division of basal keratinocytes and contributes to epidermal stratification. Required for the assembly of both primary and motile cilia. Destabilizes the interaction between CCP110 and CEP97 by competing with CEP97 for binding to CCP110 which promotes the removal of CCP110 and CEP97 from the mother centriole and allows the initiation of ciliogenesis. In Homo sapiens (Human), this protein is Enkurin domain-containing protein 1 (ENKD1).